Reading from the N-terminus, the 82-residue chain is Small ribosomal subunit protein bS18 (82 aa).

Belongs to the bacterial ribosomal protein bS18 family. As to quaternary structure, part of the 30S ribosomal subunit. Forms a tight heterodimer with protein bS6.

Binds as a heterodimer with protein bS6 to the central domain of the 16S rRNA, where it helps stabilize the platform of the 30S subunit. The sequence is that of Small ribosomal subunit protein bS18 from Bartonella bacilliformis (strain ATCC 35685 / KC583 / Herrer 020/F12,63).